The sequence spans 624 residues: Polycystin-2-like protein 2 (624 aa).

Residues 1–31 (MAEASRWHRGGASKHKLHYRKEVEITTTLQE) lie on the Cytoplasmic side of the membrane. Residues 32-52 (LLLYFIFLINLCILTFGMVNP) form a helical membrane-spanning segment. At 53–276 (HMYYLNKVMS…YSVKLLRYVS (224 aa)) the chain is on the extracellular side. N115 and N138 each carry an N-linked (GlcNAc...) asparagine glycan. Residues 277–297 (YYDYFIASCEITFCIFLFVFT) form a helical membrane-spanning segment. The Cytoplasmic portion of the chain corresponds to 298-314 (TQEVKKIKEFKSAYFKS). Residues 315-335 (IWNWLELLLLLLCFVAVSFNT) traverse the membrane as a helical segment. Residues 336–360 (YYNVQIFLLLGQLLKSTEKYSDFYF) lie on the Extracellular side of the membrane. A helical membrane pass occupies residues 361–381 (LACWHIYYNNIIAITIFFAWI). Residues 382 to 406 (KIFKFISFNKTMSQLSSTLSRCVKD) are Cytoplasmic-facing. The chain crosses the membrane as a helical span at residues 407–427 (IVGFAIMFFIIFFAYAQLGFL). The Extracellular segment spans residues 428 to 469 (VFGSQVDDFSTFQNSIFAQFRIVLGDFNFAGIQQANPILGPI). A helical membrane pass occupies residues 470–490 (YFITFIFFVFFVLLNMFLAII). Residues 491–624 (NDTYSEVKAD…NQVVRKVSAL (134 aa)) lie on the Cytoplasmic side of the membrane. A coiled-coil region spans residues 556–576 (ENEIQNAEQMKKWKERLEKKY).

This sequence belongs to the polycystin family. As to quaternary structure, interacts with TRPC1 and TRPC5. In terms of tissue distribution, expressed only in testis. Expressed also in brain and kidney. Expressed only in transformed lymphoblasts.

The protein localises to the membrane. In terms of biological role, exhibits a lower single conductance but no spontaneous channel activity. May function as a regulator of calcium channels or a channel component involving Ca2(+) homeostasis. The polypeptide is Polycystin-2-like protein 2 (Homo sapiens (Human)).